Reading from the N-terminus, the 832-residue chain is Spindle pole body component alp6 (832 aa).

The tract at residues 1-186 is interaction with mzt1; that stretch reads MSEIHVKTAL…STETSSVQHT (186 aa). Thr286 bears the Phosphothreonine mark.

Belongs to the TUBGCP family. In terms of assembly, part of the gamma-tubulin complex. Interacts directly with mzt1. Interacts with mto1. Interacts with mto2.

It localises to the cytoplasm. It is found in the cytoskeleton. The protein resides in the microtubule organizing center. Its subcellular location is the spindle pole body. In terms of biological role, component of the gamma tubule complex that is required for the regulation of both interphase microtubules and mitotic bipolar spindles. This is Spindle pole body component alp6 (alp6) from Schizosaccharomyces pombe (strain 972 / ATCC 24843) (Fission yeast).